The following is a 270-amino-acid chain: ATP synthase subunit a 1 (270 aa).

Helical transmembrane passes span Val38–Tyr58, Ile98–Val118, Asp143–Ile163, Leu208–Trp228, and Ala239–Val259.

It belongs to the ATPase A chain family. As to quaternary structure, F-type ATPases have 2 components, CF(1) - the catalytic core - and CF(0) - the membrane proton channel. CF(1) has five subunits: alpha(3), beta(3), gamma(1), delta(1), epsilon(1). CF(0) has three main subunits: a(1), b(2) and c(9-12). The alpha and beta chains form an alternating ring which encloses part of the gamma chain. CF(1) is attached to CF(0) by a central stalk formed by the gamma and epsilon chains, while a peripheral stalk is formed by the delta and b chains.

The protein localises to the cell inner membrane. Functionally, key component of the proton channel; it plays a direct role in the translocation of protons across the membrane. In Vibrio campbellii (strain ATCC BAA-1116), this protein is ATP synthase subunit a 1.